Here is an 81-residue protein sequence, read N- to C-terminus: Anaphase-promoting complex subunit emb-1 (81 aa).

The APC/C is probably composed of at least 12 subunits: apc-2, apc-10, apc-11, cdc-26, emb-1, emb-27, emb-30, mat-1, mat-2, mat-3, such-1 and gfi-3. Expressed in germ cells.

It functions in the pathway protein modification; protein ubiquitination. Probable component of the anaphase promoting complex/cyclosome (APC/C), a cell cycle-regulated E3 ubiquitin ligase that controls progression through mitosis and the G1 phase of the cell cycle. The APC/C complex acts by mediating ubiquitination and subsequent degradation of target proteins. Developmental role in early embryogenesis and the metaphase to anaphase transition in meiosis and mitosis. May be required for germline proliferation. Required for male tail development and hermaphrodite vulva formation. The protein is Anaphase-promoting complex subunit emb-1 of Caenorhabditis elegans.